The primary structure comprises 892 residues: Alpha-actinin-1 (892 aa).

Met1 is subject to N-acetylmethionine. An actin-binding region spans residues 1 to 247 (MDHYDSQQTN…IMTYVSSFYH (247 aa)). Ser6 carries the phosphoserine modification. Tyr12 carries the phosphotyrosine; by FAK1 modification. Calponin-homology (CH) domains follow at residues 31–135 (KQQR…LRFA) and 144–250 (TSAK…HAFS). Lys95 and Lys195 each carry N6-acetyllysine. Spectrin repeat units follow at residues 274–384 (QLME…WLLN), 394–499 (HLAE…ALER), 509–620 (QLYL…ALTE), and 630–733 (RLRK…EVEN). An interaction with DDN region spans residues 274-733 (QLMEDYEKLA…IARTINEVEN (460 aa)). The residue at position 471 (Ser471) is a Phosphoserine. Residue Lys676 is modified to N6-acetyllysine. Ser677 carries the phosphoserine modification. EF-hand domains lie at 746-781 (EQMN…LGYD) and 787-822 (QGEA…ETAD). Ca(2+)-binding residues include Asp759, Asp761, Ser763, Thr765, and Glu770. Ser890 is subject to Phosphoserine.

The protein belongs to the alpha-actinin family. Homodimer; antiparallel. Interacts with MYOZ2, TTID and LPP. Interacts with DDN. Interacts with PSD. Interacts with MICALL2. Interacts with DNM2 and CTTN. Interacts with PDLIM1. Interacts with PDLIM2. Interacts with PDLIM4 (via PDZ domain). Interacts with IGSF8.

It localises to the cytoplasm. The protein resides in the cytoskeleton. Its subcellular location is the myofibril. It is found in the sarcomere. The protein localises to the z line. It localises to the cell membrane. The protein resides in the cell junction. Its subcellular location is the cell projection. It is found in the ruffle. In terms of biological role, F-actin cross-linking protein which is thought to anchor actin to a variety of intracellular structures. Association with IGSF8 regulates the immune synapse formation and is required for efficient T-cell activation. The sequence is that of Alpha-actinin-1 (Actn1) from Rattus norvegicus (Rat).